A 297-amino-acid polypeptide reads, in one-letter code: Adrenocorticotropic hormone receptor (297 aa).

Residues 1 to 23 (MKHIINSYENINNTARNNSDCPR) lie on the Extracellular side of the membrane. N-linked (GlcNAc...) asparagine glycans are attached at residues asparagine 12 and asparagine 17. 2 disulfides stabilise this stretch: cysteine 21–cysteine 253 and cysteine 245–cysteine 251. Residues 24-49 (VVLPEEIFFTISIVGVLENLIVLLAV) traverse the membrane as a helical segment. Residues 50-58 (FKNKNLQAP) are Cytoplasmic-facing. Residues 59–79 (MYFFICSLAISDMLGSLYKIL) traverse the membrane as a helical segment. At 80–104 (ENILIILRNMGYLKPRGSFETTADD) the chain is on the extracellular side. Residues 105 to 126 (IIDSLFVLSLLGSIFSLSVIAA) form a helical membrane-spanning segment. At 127–147 (DRYITIFHALRYHSIVTMRRT) the chain is on the cytoplasmic side. The chain crosses the membrane as a helical span at residues 148–168 (VVVLTVIWTFCTGTGITMVIF). Residues 169 to 180 (SHHVPTVITFTS) lie on the Extracellular side of the membrane. A helical transmembrane segment spans residues 181 to 199 (LFPLMLVFILCLYVHMFLL). Residues 200 to 217 (ARSHTRKISTLPRANMKG) lie on the Cytoplasmic side of the membrane. A helical transmembrane segment spans residues 218-244 (AITLTILLGVFIFCWAPFVLHVLLMTF). The Extracellular segment spans residues 245–256 (CPSNPYCACYMS). Residues 257–278 (LFQVNGMLIMCNAVIDPFIYAF) form a helical membrane-spanning segment. Residues 279–297 (RSPELRDAFKKMIFCSRYW) lie on the Cytoplasmic side of the membrane. Cysteine 293 is lipidated: S-palmitoyl cysteine.

Belongs to the G-protein coupled receptor 1 family. As to quaternary structure, homodimer. Interacts with corticotropin (ACTH). Interacts with MRAP; this interaction targets MC2R to the plasma membrane. Interacts with MRAP2; competing with MRAP for binding to MC2R and impairing the binding of corticotropin (ACTH). Ubiquitinated by MGRN1 that may be involved in post-endocytic trafficking and/or degradation of internalized receptor. As to expression, melanocytes and corticoadrenal tissue.

Its subcellular location is the cell membrane. Functionally, hormone receptor primarily expressed in adrenal cortex that plays a key role in regulating adrenocortical function. Upon corticotropin (ACTH) binding, facilitates the release of adrenal glucocorticoids, including cortisol and corticosterone. In addition, MC2R is required for fetal and neonatal adrenal gland development. Mechanistically, activates adenylate cyclase (cAMP), the MAPK cascade as well as the cAMP-dependent protein kinase A pathway leading to steroidogenic factor 1/NR5A1-mediated transcriptional activation. The sequence is that of Adrenocorticotropic hormone receptor (MC2R) from Homo sapiens (Human).